The chain runs to 988 residues: Bifunctional glutamine synthetase adenylyltransferase/adenylyl-removing enzyme (988 aa).

The adenylyl removase stretch occupies residues 1–474 (MSSSAIDADI…HYSKLFEGDP (474 aa)). Positions 480–988 (LPIDYAGGAE…FNRLIGGNGE (509 aa)) are adenylyl transferase.

The protein belongs to the GlnE family. Mg(2+) serves as cofactor.

It catalyses the reaction [glutamine synthetase]-O(4)-(5'-adenylyl)-L-tyrosine + phosphate = [glutamine synthetase]-L-tyrosine + ADP. The catalysed reaction is [glutamine synthetase]-L-tyrosine + ATP = [glutamine synthetase]-O(4)-(5'-adenylyl)-L-tyrosine + diphosphate. Involved in the regulation of glutamine synthetase GlnA, a key enzyme in the process to assimilate ammonia. When cellular nitrogen levels are high, the C-terminal adenylyl transferase (AT) inactivates GlnA by covalent transfer of an adenylyl group from ATP to specific tyrosine residue of GlnA, thus reducing its activity. Conversely, when nitrogen levels are low, the N-terminal adenylyl removase (AR) activates GlnA by removing the adenylyl group by phosphorolysis, increasing its activity. The regulatory region of GlnE binds the signal transduction protein PII (GlnB) which indicates the nitrogen status of the cell. This Rhodopseudomonas palustris (strain HaA2) protein is Bifunctional glutamine synthetase adenylyltransferase/adenylyl-removing enzyme.